A 446-amino-acid polypeptide reads, in one-letter code: Putative RNA-ligase (446 aa).

The protein belongs to the asfivirus M448R family.

The protein resides in the virion. The protein is Putative RNA-ligase of African swine fever virus (isolate Tick/Malawi/Lil 20-1/1983) (ASFV).